Consider the following 244-residue polypeptide: Neurogenin-1 (244 aa).

2 disordered regions span residues 1–27 (MPAPLETCISDLDCSSSNSSSDLSSFL) and 39–82 (LAST…ARVR). Residues 10 to 27 (SDLDCSSSNSSSDLSSFL) are compositionally biased toward low complexity. Positions 93–145 (SRRVKANDRERNRMHNLNAALDALRSVLPSFPDDTKLTKIETLRFAYNYIWAL) constitute a bHLH domain.

In terms of assembly, efficient DNA binding requires dimerization with another bHLH protein. Expression restricted to the embryonic nervous system.

The protein resides in the nucleus. In terms of biological role, acts as a transcriptional regulator. Involved in the initiation of neuronal differentiation. Activates transcription by binding to the E box (5'-CANNTG-3'). Associates with chromatin to enhancer regulatory elements in genes encoding key transcriptional regulators of neurogenesis. The sequence is that of Neurogenin-1 (Neurog1) from Mus musculus (Mouse).